The sequence spans 232 residues: UPF0758 protein EF_2926 (232 aa).

The region spanning 107 to 229 (KVTSSQQVAQ…YISLREENFF (123 aa)) is the MPN domain. His178, His180, and Asp191 together coordinate Zn(2+). The short motif at 178–191 (HNHPSGNPTPSPQD) is the JAMM motif element.

Belongs to the UPF0758 family.

This is UPF0758 protein EF_2926 from Enterococcus faecalis (strain ATCC 700802 / V583).